A 371-amino-acid chain; its full sequence is N-acetyldiaminopimelate deacetylase (371 aa).

Asp-68 is a catalytic residue. The Proton acceptor role is filled by Glu-127.

It belongs to the peptidase M20A family. N-acetyldiaminopimelate deacetylase subfamily.

It catalyses the reaction N-acetyl-(2S,6S)-2,6-diaminopimelate + H2O = (2S,6S)-2,6-diaminopimelate + acetate. It participates in amino-acid biosynthesis; L-lysine biosynthesis via DAP pathway; LL-2,6-diaminopimelate from (S)-tetrahydrodipicolinate (acetylase route): step 3/3. Its function is as follows. Catalyzes the conversion of N-acetyl-diaminopimelate to diaminopimelate and acetate. The sequence is that of N-acetyldiaminopimelate deacetylase from Oceanobacillus iheyensis (strain DSM 14371 / CIP 107618 / JCM 11309 / KCTC 3954 / HTE831).